A 419-amino-acid polypeptide reads, in one-letter code: Diaminopimelate decarboxylase (419 aa).

An N6-(pyridoxal phosphate)lysine modification is found at Lys-56. Residues Gly-234 and 274 to 277 (EPGR) each bind pyridoxal 5'-phosphate. Residues Arg-277, Arg-312, and Tyr-316 each coordinate substrate. The Proton donor role is filled by Cys-343. Positions 344 and 372 each coordinate substrate. Tyr-372 is a pyridoxal 5'-phosphate binding site.

This sequence belongs to the Orn/Lys/Arg decarboxylase class-II family. LysA subfamily. As to quaternary structure, homodimer. Requires pyridoxal 5'-phosphate as cofactor.

It catalyses the reaction meso-2,6-diaminopimelate + H(+) = L-lysine + CO2. It functions in the pathway amino-acid biosynthesis; L-lysine biosynthesis via DAP pathway; L-lysine from DL-2,6-diaminopimelate: step 1/1. Functionally, specifically catalyzes the decarboxylation of meso-diaminopimelate (meso-DAP) to L-lysine. In Archaeoglobus fulgidus (strain ATCC 49558 / DSM 4304 / JCM 9628 / NBRC 100126 / VC-16), this protein is Diaminopimelate decarboxylase.